The following is a 653-amino-acid chain: MGKIIGIDLGTTNSCVALMEGNQVKVIENSEGARTTPSIIAYMDDNEVLVGAPAKRQSVTNPKNTLYAVKRLIGRRFEEKEVQKDIGLMPYKIVKHDNGDAWVEAHGNKLAPSQVSAEVLRKMKKTAEDYLGEPVTEAVITVPAYFNDSQRQATKDAGRIAGLEVKRIINEPTAAALAFGLDKAEKGDRKIAVFDLGGGTFDISIIEIADVDGEKQFEVLSTNGDTFLGGEDFDQRIIDYIIGEFKKEQGVDLSKDVLALQRLKEAAEKAKIELSSGQQTEINLPYITADASGPKHLNLKITRAKLEALVEDLIERTIEPCRVAIKDAGVKVGEIDDVILVGGQTRMPKVQEKVKEFFGKDPRRDVNPDEAVAVGAAIQGQVLSGDRKDVLLLDVTPLSLGIETLGGVMTKMINKNTTIPTKHAQVYSTADDNQGAVTIKVFQGEREMAAGNKLLGEFNLEGIPPAPRGVPQIEVSFDIDANGILHVGAKDKATGKENRITIKANSGLSEAEIEKMVKDAEANAEEDHKLRELADARNQGDALVHSTKKALTEYGDKLEAGEKEKIEAALKDLEETLKNGSSDKAAIEAKIETVATASQKLGEKMYADMQAQGAAGAAGAAGGAGAAAGAEAAGASQQADDVVDAEFKEVKKD.

A Phosphothreonine; by autocatalysis modification is found at Thr200. Positions 612–653 (QGAAGAAGAAGGAGAAAGAEAAGASQQADDVVDAEFKEVKKD) are disordered. Positions 627 to 639 (AAGAEAAGASQQA) are enriched in low complexity.

Belongs to the heat shock protein 70 family.

In terms of biological role, acts as a chaperone. This Paraburkholderia phymatum (strain DSM 17167 / CIP 108236 / LMG 21445 / STM815) (Burkholderia phymatum) protein is Chaperone protein DnaK.